A 255-amino-acid chain; its full sequence is Aprataxin and PNK-like factor (255 aa).

The span at 1–11 shows a compositional bias: low complexity; that stretch reads MSATDASTADS. Disordered regions lie at residues 1–117, 131–168, and 195–255; these read MSAT…VSSS, RRNP…FGNA, and RLRQ…DDYD. Composition is skewed to basic and acidic residues over residues 12 to 22, 40 to 64, and 137 to 150; these read GAKRKSSEDIT, KSEE…KAEP, and RSAE…DYRR. PBZ-type zinc fingers lie at residues 121–142 and 161–182; these read TSCR…AEAH and PACP…DYSH. Acidic residues predominate over residues 207 to 218; that stretch reads DDSGTDEEDEPF. Residues 221–230 show a composition bias toward basic and acidic residues; sequence DNDRDADYRP. The segment covering 234-244 has biased composition (acidic residues); sequence INEDEDDELEF.

It belongs to the APLF family.

In terms of biological role, displays apurinic-apyrimidinic (AP) endonuclease and 3'-5' exonuclease activities in vitro. The protein is Aprataxin and PNK-like factor of Drosophila melanogaster (Fruit fly).